A 588-amino-acid polypeptide reads, in one-letter code: MEQGRPRSSLSLASSASTVSSLSSLSTKKPTRAVHKVHAFGKRNNALRRDPNLPVHIRGWLHKQDSSGLRLWKRRWFVLSGHCLFYYKDSREESVLGSVLLPSYSVRPDGPGAPRGRRFTFTAEHPGMRTYVLAADTLEDLRGWLRALGRASRAEGEDCGLPRSPARPRPGEGPGGPGGPPEVNRREEGRISESPEVARLSRGLGRHETHTPNSTVDLQTDTWSRRTRSPELFSPLSRPPSPLSLPRPRSAPARRPPLSAGDISFPARPHTPLSRIDVRPPLDWGPQRQTLSRPPIPRRGPSSEAGGERPPRSPQPRTPEQRTQSTQATSGSSTYLQLPPRPPGTQASMILLPGPPVDSALHQSLETDTLLTKLCGQDRLLRQLQEDLDKRQEEKEQLEAALELTRQQLGQATREAAASGKAWGRQRLLQDRLVNVRAALCHLAQERERVWDTYSGLEQDLGTLRETLEYLLHLGSPQDRACAQQHLWMVEDTLAGLGGPQKQPPHTDPKSPSPAPQGEESSERESLSESLELSSPQSPEVDWSRPSGGDRALSSPQSGVGSPRVSRASSPECRQPSSPLLRTKVDHL.

The 100-residue stretch at 54–153 (PVHIRGWLHK…WLRALGRASR (100 aa)) folds into the PH domain. Disordered regions lie at residues 155 to 349 (EGED…QASM) and 495 to 588 (AGLG…VDHL). At Ser-164 the chain carries Phosphoserine. The span at 183-193 (VNRREEGRISE) shows a compositional bias: basic and acidic residues. Residues 211-222 (TPNSTVDLQTDT) show a composition bias toward polar residues. Low complexity-rich tracts occupy residues 246 to 260 (PRPR…PLSA) and 321 to 334 (QRTQ…GSST). Position 562 is a phosphoserine (Ser-562).

Its subcellular location is the cytoplasm. The protein localises to the membrane. Its function is as follows. Binds specifically to phosphatidylinositol 3-phosphate (PtdIns3P), but not to other phosphoinositides. The protein is Pleckstrin homology domain-containing family A member 4 (Plekha4) of Mus musculus (Mouse).